The chain runs to 565 residues: Adenine deaminase (565 aa).

It belongs to the metallo-dependent hydrolases superfamily. Adenine deaminase family. The cofactor is Mn(2+).

It catalyses the reaction adenine + H2O + H(+) = hypoxanthine + NH4(+). In Cereibacter sphaeroides (strain KD131 / KCTC 12085) (Rhodobacter sphaeroides), this protein is Adenine deaminase.